Reading from the N-terminus, the 489-residue chain is Neuropeptide CCHamide-2 receptor (489 aa).

At 1-74 (MYASLMDVGQ…DRPETYIVTV (74 aa)) the chain is on the extracellular side. N-linked (GlcNAc...) asparagine glycosylation is found at Asn25 and Asn50. Residues 75-95 (LYTLIFIVGVLGNGTLVIIFF) form a helical membrane-spanning segment. Residues 96-107 (RHRSMRNIPNTY) are Cytoplasmic-facing. Residues 108-128 (ILSLALADLLVILVCVPVATI) traverse the membrane as a helical segment. The Extracellular portion of the chain corresponds to 129-143 (VYTQESWPFERNMCR). A disulfide bond links Cys142 and Cys225. The chain crosses the membrane as a helical span at residues 144–164 (ISEFFKDISIGVSVFTLTALS). The Cytoplasmic portion of the chain corresponds to 165 to 184 (GERYCAIVNPLRKLQTKPLT). The chain crosses the membrane as a helical span at residues 185 to 205 (VFTAVMIWILAILLGMPSVLF). Residues 206 to 235 (SDIKSYPVFTATGNMTIEVCSPFRDPEYAK) lie on the Extracellular side of the membrane. Asn219 carries an N-linked (GlcNAc...) asparagine glycan. A helical membrane pass occupies residues 236–256 (FMVAGKALVYYLLPLSIIGAL). The Cytoplasmic segment spans residues 257–293 (YIMMAKRLHMSARNMPGEQQSMQSRTQARARLHVARM). A helical transmembrane segment spans residues 294-314 (VVAFVVVFFICFFPYHVFELW). Over 315–333 (YHFYPTAEEDFDEFWNVLR) the chain is Extracellular. Residues 334-354 (IVGFCTSFLNSCVNPVALYCV) traverse the membrane as a helical segment. The Cytoplasmic portion of the chain corresponds to 355-489 (SGVFRQHFNR…NRYESGVMRY (135 aa)). Positions 438 to 468 (SFHRQDSMPLQHGNAHGGGAGGGSSGLGAGG) are disordered. The segment covering 452 to 468 (AHGGGAGGGSSGLGAGG) has biased composition (gly residues).

This sequence belongs to the G-protein coupled receptor 1 family. Highly expressed in larval brain. Also highly expressed in adult brain with very low levels in larval and adult gut.

Its subcellular location is the cell membrane. Its function is as follows. Receptor for the neuropeptide CCHamide-2. The protein is Neuropeptide CCHamide-2 receptor of Drosophila melanogaster (Fruit fly).